The primary structure comprises 116 residues: Cyclin-dependent protein kinase inhibitor SMR9 (116 aa).

The span at 1-22 (MASKGKKPLRRTTTRRRKRSHF) shows a compositional bias: basic residues. Positions 1–62 (MASKGKKPLR…PVSAESGCCT (62 aa)) are disordered. The span at 35 to 56 (VTSTSSTSTSPTSTATPSPVSA) shows a compositional bias: low complexity.

Its function is as follows. Probable cyclin-dependent protein kinase (CDK) inhibitor that functions as a repressor of mitosis in the endoreduplication cell cycle. The sequence is that of Cyclin-dependent protein kinase inhibitor SMR9 from Arabidopsis thaliana (Mouse-ear cress).